Here is a 491-residue protein sequence, read N- to C-terminus: UDP-N-acetylmuramoyl-L-alanyl-D-glutamate--2,6-diaminopimelate ligase (491 aa).

S30 lines the UDP-N-acetyl-alpha-D-muramoyl-L-alanyl-D-glutamate pocket. Residue 108-114 (GTNGKTT) coordinates ATP. UDP-N-acetyl-alpha-D-muramoyl-L-alanyl-D-glutamate contacts are provided by residues N149, 150-151 (TT), S177, and R185. K217 is subject to N6-carboxylysine. Residues R383, 407–410 (DNPR), G457, and E461 each bind meso-2,6-diaminopimelate. The Meso-diaminopimelate recognition motif motif lies at 407–410 (DNPR).

Belongs to the MurCDEF family. MurE subfamily. Requires Mg(2+) as cofactor. Post-translationally, carboxylation is probably crucial for Mg(2+) binding and, consequently, for the gamma-phosphate positioning of ATP.

The protein localises to the cytoplasm. The catalysed reaction is UDP-N-acetyl-alpha-D-muramoyl-L-alanyl-D-glutamate + meso-2,6-diaminopimelate + ATP = UDP-N-acetyl-alpha-D-muramoyl-L-alanyl-gamma-D-glutamyl-meso-2,6-diaminopimelate + ADP + phosphate + H(+). It functions in the pathway cell wall biogenesis; peptidoglycan biosynthesis. Catalyzes the addition of meso-diaminopimelic acid to the nucleotide precursor UDP-N-acetylmuramoyl-L-alanyl-D-glutamate (UMAG) in the biosynthesis of bacterial cell-wall peptidoglycan. The protein is UDP-N-acetylmuramoyl-L-alanyl-D-glutamate--2,6-diaminopimelate ligase of Bacillus cereus (strain ATCC 14579 / DSM 31 / CCUG 7414 / JCM 2152 / NBRC 15305 / NCIMB 9373 / NCTC 2599 / NRRL B-3711).